The following is a 419-amino-acid chain: NFATC2-interacting protein (419 aa).

Disordered regions lie at residues 1–131 (MAEP…GKVK) and 151–215 (DEEE…HTRA). Gly residues predominate over residues 11–27 (WSGGSGAGRGGRGGWGG). The segment covering 35-51 (QRSPSRGTLDVVSVDLV) has biased composition (low complexity). Phosphoserine is present on residues serine 54, serine 84, serine 88, serine 90, serine 92, and serine 127. Glycyl lysine isopeptide (Lys-Gly) (interchain with G-Cter in SUMO2) cross-links involve residues lysine 129 and lysine 131. The segment covering 180–192 (RTKDKEEKKKTEF) has biased composition (basic and acidic residues). Serine 198, serine 201, serine 204, serine 220, and serine 314 each carry phosphoserine. A coiled-coil region spans residues 209-231 (SRTHTRALKKLSEVNKRLQDLRS). Phosphothreonine occurs at positions 316 and 318. A Ubiquitin-like domain is found at 348–419 (LQLRVQGKEK…ESGDLIEVWG (72 aa)). Phosphoserine is present on residues serine 369 and serine 390.

In terms of assembly, interacts with NFATC2, TRAF1, TRAF2 and PRMT1. Interacts with UBE2I/UBC9. Post-translationally, methylation at the N-terminus by PRMT1 modulates interaction with the NFAT complex and results in augmented cytokine production.

It localises to the nucleus. It is found in the cytoplasm. In T-helper 2 (Th2) cells, regulates the magnitude of NFAT-driven transcription of a specific subset of cytokine genes, including IL3, IL4, IL5 and IL13, but not IL2. Recruits PRMT1 to the IL4 promoter; this leads to enhancement of histone H4 'Arg-3'-methylation and facilitates subsequent histone acetylation at the IL4 locus, thus promotes robust cytokine expression. Down-regulates formation of poly-SUMO chains by UBE2I/UBC9. This chain is NFATC2-interacting protein (NFATC2IP), found in Homo sapiens (Human).